Consider the following 416-residue polypeptide: Dihydroorotase (416 aa).

Zn(2+) is bound by residues histidine 53 and histidine 55. Substrate-binding positions include 55 to 57 (HLR) and asparagine 87. Zn(2+)-binding residues include aspartate 145, histidine 172, histidine 225, and aspartate 298. Residue aspartate 298 is part of the active site. Histidine 302 is a substrate binding site.

It belongs to the metallo-dependent hydrolases superfamily. DHOase family. Class I DHOase subfamily. The cofactor is Zn(2+).

The catalysed reaction is (S)-dihydroorotate + H2O = N-carbamoyl-L-aspartate + H(+). It functions in the pathway pyrimidine metabolism; UMP biosynthesis via de novo pathway; (S)-dihydroorotate from bicarbonate: step 3/3. Its function is as follows. Catalyzes the reversible cyclization of carbamoyl aspartate to dihydroorotate. This chain is Dihydroorotase, found in Deinococcus radiodurans (strain ATCC 13939 / DSM 20539 / JCM 16871 / CCUG 27074 / LMG 4051 / NBRC 15346 / NCIMB 9279 / VKM B-1422 / R1).